The primary structure comprises 619 residues: Probable Xaa-Pro aminopeptidase P (619 aa).

The Mn(2+) site is built by Asp-415, Asp-426, Glu-524, and Glu-538.

It belongs to the peptidase M24B family. Requires Mn(2+) as cofactor.

It catalyses the reaction Release of any N-terminal amino acid, including proline, that is linked to proline, even from a dipeptide or tripeptide.. Functionally, catalyzes the removal of a penultimate prolyl residue from the N-termini of peptides. The chain is Probable Xaa-Pro aminopeptidase P (AMPP) from Fusarium vanettenii (strain ATCC MYA-4622 / CBS 123669 / FGSC 9596 / NRRL 45880 / 77-13-4) (Fusarium solani subsp. pisi).